The following is a 197-amino-acid chain: Holliday junction branch migration complex subunit RuvA (197 aa).

The domain I stretch occupies residues methionine 1–leucine 63. The domain II stretch occupies residues asparagine 64–serine 139. Residue serine 139 is a region of interest, flexible linker. A domain III region spans residues threonine 140 to asparagine 197.

The protein belongs to the RuvA family. As to quaternary structure, homotetramer. Forms an RuvA(8)-RuvB(12)-Holliday junction (HJ) complex. HJ DNA is sandwiched between 2 RuvA tetramers; dsDNA enters through RuvA and exits via RuvB. An RuvB hexamer assembles on each DNA strand where it exits the tetramer. Each RuvB hexamer is contacted by two RuvA subunits (via domain III) on 2 adjacent RuvB subunits; this complex drives branch migration. In the full resolvosome a probable DNA-RuvA(4)-RuvB(12)-RuvC(2) complex forms which resolves the HJ.

The protein localises to the cytoplasm. The RuvA-RuvB-RuvC complex processes Holliday junction (HJ) DNA during genetic recombination and DNA repair, while the RuvA-RuvB complex plays an important role in the rescue of blocked DNA replication forks via replication fork reversal (RFR). RuvA specifically binds to HJ cruciform DNA, conferring on it an open structure. The RuvB hexamer acts as an ATP-dependent pump, pulling dsDNA into and through the RuvAB complex. HJ branch migration allows RuvC to scan DNA until it finds its consensus sequence, where it cleaves and resolves the cruciform DNA. The protein is Holliday junction branch migration complex subunit RuvA of Borreliella burgdorferi (strain ATCC 35210 / DSM 4680 / CIP 102532 / B31) (Borrelia burgdorferi).